The chain runs to 147 residues: Large ribosomal subunit protein bL9 (147 aa).

The protein belongs to the bacterial ribosomal protein bL9 family.

In terms of biological role, binds to the 23S rRNA. In Halalkalibacterium halodurans (strain ATCC BAA-125 / DSM 18197 / FERM 7344 / JCM 9153 / C-125) (Bacillus halodurans), this protein is Large ribosomal subunit protein bL9.